Reading from the N-terminus, the 270-residue chain is MTLKLAIVGAGGRMGRQLIQAVQAAEGVELGAAFERKGSSLIGADAGELAGLGELGIKVAEDLAAEKDKFDIIIDFTRPEGSLEHIKFCVANNKKLILGTTGFDDAGKQAIGKAAEKTAIVFASNYSVGVNLVFKLLEKAAKVMGDYSDIEIIEAHHRHKVDAPSGTALSMGEHIAKTLGRDLKVNGVFSREGITGERKRTDIGFSTIRAADVVGEHTVWFADIGERVEISHKASSRMTFANGAVRAAKWLANKQIGLFDMTDVLDLNNL.

NAD(+) is bound by residues 9-14 (GAGGRM) and Glu35. Arg36 serves as a coordination point for NADP(+). NAD(+)-binding positions include 99 to 101 (GTT) and 123 to 126 (ASNY). His156 (proton donor/acceptor) is an active-site residue. Residue His157 participates in (S)-2,3,4,5-tetrahydrodipicolinate binding. The active-site Proton donor is Lys160. 166-167 (GT) provides a ligand contact to (S)-2,3,4,5-tetrahydrodipicolinate.

Belongs to the DapB family.

It localises to the cytoplasm. It catalyses the reaction (S)-2,3,4,5-tetrahydrodipicolinate + NAD(+) + H2O = (2S,4S)-4-hydroxy-2,3,4,5-tetrahydrodipicolinate + NADH + H(+). It carries out the reaction (S)-2,3,4,5-tetrahydrodipicolinate + NADP(+) + H2O = (2S,4S)-4-hydroxy-2,3,4,5-tetrahydrodipicolinate + NADPH + H(+). It functions in the pathway amino-acid biosynthesis; L-lysine biosynthesis via DAP pathway; (S)-tetrahydrodipicolinate from L-aspartate: step 4/4. Its function is as follows. Catalyzes the conversion of 4-hydroxy-tetrahydrodipicolinate (HTPA) to tetrahydrodipicolinate. The protein is 4-hydroxy-tetrahydrodipicolinate reductase of Mannheimia succiniciproducens (strain KCTC 0769BP / MBEL55E).